Consider the following 77-residue polypeptide: MARVCEVTGKKPMVGNNVSHANNKTKRRFLPNLQYRRFWVESENRWVRLRVSSAALRLIDKNGIDSVLADLRARGQA.

It belongs to the bacterial ribosomal protein bL28 family.

The polypeptide is Large ribosomal subunit protein bL28 (Delftia acidovorans (strain DSM 14801 / SPH-1)).